A 177-amino-acid chain; its full sequence is MRLAKEVEAALDLLIIFLAQATYVSVNTVRWIILVKGRRLLASAISFFEVILWVYALGLVVSQLSDPVKVATYALGYAVGALVGSKIEERLALGYVLFQVITTRIGELAPALREHGLGVTDWRAEGRMGQREVLMVVARRKNGPQVVRLLEELDPQAFVVQLDASWYRGGFIQKMLQ.

The next 2 membrane-spanning stretches (helical) occupy residues 9 to 29 (AALD…VNTV) and 41 to 61 (LASA…GLVV).

This sequence belongs to the UPF0316 family.

The protein resides in the cell membrane. The sequence is that of UPF0316 protein STH2077 from Symbiobacterium thermophilum (strain DSM 24528 / JCM 14929 / IAM 14863 / T).